The sequence spans 316 residues: Ribosomal protein L11 methyltransferase (316 aa).

S-adenosyl-L-methionine-binding residues include threonine 161, glycine 182, aspartate 204, and asparagine 249.

Belongs to the methyltransferase superfamily. PrmA family.

The protein localises to the cytoplasm. The enzyme catalyses L-lysyl-[protein] + 3 S-adenosyl-L-methionine = N(6),N(6),N(6)-trimethyl-L-lysyl-[protein] + 3 S-adenosyl-L-homocysteine + 3 H(+). In terms of biological role, methylates ribosomal protein L11. The protein is Ribosomal protein L11 methyltransferase of Ruminiclostridium cellulolyticum (strain ATCC 35319 / DSM 5812 / JCM 6584 / H10) (Clostridium cellulolyticum).